A 417-amino-acid chain; its full sequence is Gamma-glutamyl phosphate reductase (417 aa).

This sequence belongs to the gamma-glutamyl phosphate reductase family.

The protein localises to the cytoplasm. It carries out the reaction L-glutamate 5-semialdehyde + phosphate + NADP(+) = L-glutamyl 5-phosphate + NADPH + H(+). It functions in the pathway amino-acid biosynthesis; L-proline biosynthesis; L-glutamate 5-semialdehyde from L-glutamate: step 2/2. In terms of biological role, catalyzes the NADPH-dependent reduction of L-glutamate 5-phosphate into L-glutamate 5-semialdehyde and phosphate. The product spontaneously undergoes cyclization to form 1-pyrroline-5-carboxylate. The polypeptide is Gamma-glutamyl phosphate reductase (Escherichia coli (strain SMS-3-5 / SECEC)).